Consider the following 872-residue polypeptide: Probable cation-transporting P-type ATPase (872 aa).

Residues 1 to 41 (MNKWTGLSAAAVLESRAQHGANLIPTKKLTPFWLLFLEQFK) are Cytoplasmic-facing. The helical transmembrane segment at 42 to 62 (SLVVILLLVATILSLVVAIIS) threads the bilayer. The Extracellular segment spans residues 63-79 (GVNANWLFDHNLVIEWT). Residues 80-100 (QPFVILITVLANSLIGSIQEF) traverse the membrane as a helical segment. Topologically, residues 101 to 237 (KAQKSAHTLK…TKLSPLQQKL (137 aa)) are cytoplasmic. A helical transmembrane segment spans residues 238–257 (EKVGKWFSWFGLGLFVVVFL). Residues 258-275 (VQLGLLGFHNFSANWSIA) are Extracellular-facing. Residues 276–293 (LIGAIALVVAIIPEGLVT) traverse the membrane as a helical segment. Over 294–642 (FINVIFALSV…EQGRKTFLTC (349 aa)) the chain is Cytoplasmic. Asp-331 acts as the 4-aspartylphosphate intermediate in catalysis. Mg(2+) is bound by residues Asp-587 and Asp-591. Residues 643 to 662 (KRVLFNLFLTSIAGTIVVLL) traverse the membrane as a helical segment. Topologically, residues 663–685 (GLFVLGEVFREQLSKANHNFQVF) are extracellular. The helical transmembrane segment at 686–706 (TPTQLLIINLFVHGFPAVALA) threads the bilayer. The Cytoplasmic segment spans residues 707–724 (IQPVQEKLMLKPFSTKNL). Residues 725 to 747 (FYNRGGFDLIWQSLLLSFLTLLF) form a helical membrane-spanning segment. The Extracellular segment spans residues 748–768 (YSLGMVYAINDPELGKSGDLI). The chain crosses the membrane as a helical span at residues 769–788 (NRAGATCGFMVLGGSAALNS). The Cytoplasmic segment spans residues 789–801 (LNLMVDRPLVATN). Residues 802–824 (PKHYGIVWLGALSSIFVFLLIIF) traverse the membrane as a helical segment. Over 825 to 842 (INPLGLVFSTLKDLTAHP) the chain is Extracellular. Residues 843–863 (VLIGYSFGGVLLYMTINEVVK) form a helical membrane-spanning segment. Residues 864-872 (LIRLSYGSV) lie on the Cytoplasmic side of the membrane.

It belongs to the cation transport ATPase (P-type) (TC 3.A.3) family. Type II subfamily.

It localises to the cell membrane. It carries out the reaction ATP + H2O = ADP + phosphate + H(+). In terms of biological role, could mediate calcium influx. This chain is Probable cation-transporting P-type ATPase (pacL), found in Mycoplasma pneumoniae (strain ATCC 29342 / M129 / Subtype 1) (Mycoplasmoides pneumoniae).